We begin with the raw amino-acid sequence, 176 residues long: ATP-dependent protease subunit HslV (176 aa).

Thr-2 is a catalytic residue. Positions 157, 160, and 163 each coordinate Na(+).

This sequence belongs to the peptidase T1B family. HslV subfamily. As to quaternary structure, a double ring-shaped homohexamer of HslV is capped on each side by a ring-shaped HslU homohexamer. The assembly of the HslU/HslV complex is dependent on binding of ATP.

The protein resides in the cytoplasm. It catalyses the reaction ATP-dependent cleavage of peptide bonds with broad specificity.. With respect to regulation, allosterically activated by HslU binding. Its function is as follows. Protease subunit of a proteasome-like degradation complex believed to be a general protein degrading machinery. The polypeptide is ATP-dependent protease subunit HslV (Proteus mirabilis (strain HI4320)).